The chain runs to 449 residues: Biotin carboxylase (449 aa).

In terms of domain architecture, Biotin carboxylation spans 1–445 (MLDKIVIANR…NIHYLEKKLG (445 aa)). ATP-binding positions include Lys-116, Lys-159, 165–166 (GG), 201–204 (EKYL), His-209, and His-236. The 198-residue stretch at 120–317 (IAAMKKAGVP…LIKEQLRIAA (198 aa)) folds into the ATP-grasp domain. Lys-238 contacts hydrogencarbonate. Residues Glu-276 and Glu-288 each contribute to the ATP site. Mg(2+) contacts are provided by Glu-276, Glu-288, and Asn-290. Mn(2+)-binding residues include Glu-276, Glu-288, and Asn-290. Residues Arg-292, Val-295, and Arg-338 each coordinate hydrogencarbonate. The active site involves Arg-292. Arg-338 contacts biotin.

As to quaternary structure, acetyl-CoA carboxylase is a heterohexamer of biotin carboxyl carrier protein, biotin carboxylase and the two subunits of carboxyl transferase in a 2:2 complex. It depends on Mg(2+) as a cofactor. Mn(2+) serves as cofactor.

The enzyme catalyses N(6)-biotinyl-L-lysyl-[protein] + hydrogencarbonate + ATP = N(6)-carboxybiotinyl-L-lysyl-[protein] + ADP + phosphate + H(+). Its pathway is lipid metabolism; malonyl-CoA biosynthesis; malonyl-CoA from acetyl-CoA: step 1/1. This protein is a component of the acetyl coenzyme A carboxylase complex; first, biotin carboxylase catalyzes the carboxylation of the carrier protein and then the transcarboxylase transfers the carboxyl group to form malonyl-CoA. This Escherichia coli (strain K12) protein is Biotin carboxylase (accC).